The following is a 121-amino-acid chain: Peptidyl-tRNA hydrolase (121 aa).

Belongs to the PTH2 family.

Its subcellular location is the cytoplasm. The catalysed reaction is an N-acyl-L-alpha-aminoacyl-tRNA + H2O = an N-acyl-L-amino acid + a tRNA + H(+). The natural substrate for this enzyme may be peptidyl-tRNAs which drop off the ribosome during protein synthesis. The sequence is that of Peptidyl-tRNA hydrolase from Staphylothermus marinus (strain ATCC 43588 / DSM 3639 / JCM 9404 / F1).